A 152-amino-acid chain; its full sequence is Ribonuclease pancreatic beta-type (152 aa).

The signal sequence occupies residues 1–25 (MGLEKSFILFSLLVLVLGWVQPSLG). A compositionally biased stretch (basic and acidic residues) spans 31 to 45 (SSADKFKRQHMDPES). The tract at residues 31 to 53 (SSADKFKRQHMDPESPSKSSPTY) is disordered. Substrate-binding residues include Lys35 and Arg38. His40 acts as the Proton acceptor in catalysis. 4 disulfide bridges follow: Cys54–Cys112, Cys68–Cys123, Cys86–Cys138, and Cys93–Cys100. Residues 69–73 (KPVNT), Lys94, and Arg113 contribute to the substrate site. His147 acts as the Proton donor in catalysis.

It belongs to the pancreatic ribonuclease family. In terms of assembly, monomer.

Its subcellular location is the secreted. It carries out the reaction an [RNA] containing cytidine + H2O = an [RNA]-3'-cytidine-3'-phosphate + a 5'-hydroxy-ribonucleotide-3'-[RNA].. It catalyses the reaction an [RNA] containing uridine + H2O = an [RNA]-3'-uridine-3'-phosphate + a 5'-hydroxy-ribonucleotide-3'-[RNA].. In terms of biological role, endonuclease that catalyzes the cleavage of RNA on the 3' side of pyrimidine nucleotides. Acts on single-stranded and double-stranded RNA. The chain is Ribonuclease pancreatic beta-type from Rattus exulans (Polynesian rat).